The following is a 255-amino-acid chain: MQDKSVREIKEIIETLEVEKYMEYIELLRVDERKSVQGLAIKLAKKLDNIRKEEERLETINIFENEGYDKGYLYIGGIDEAGRGPLAGPVVASVVVFKKDTKIEGVNDSKKLSEAKRDELFEVIKEEALDYGIGIVNNEEIDEFNILNATYMAMKKAINCLKKAPDYLLVDAATIPGIDISQNPIVKGDSKSISIAAASILAKVTRDSIMYQYDRVYPEYGFKSHKGYGTKEHYEAIEKYGITPIHRKSFLKNIL.

One can recognise an RNase H type-2 domain in the interval 73 to 255; it reads LYIGGIDEAG…HRKSFLKNIL (183 aa). 3 residues coordinate a divalent metal cation: Asp79, Glu80, and Asp171.

This sequence belongs to the RNase HII family. Mn(2+) serves as cofactor. Mg(2+) is required as a cofactor.

The protein localises to the cytoplasm. It carries out the reaction Endonucleolytic cleavage to 5'-phosphomonoester.. Its function is as follows. Endonuclease that specifically degrades the RNA of RNA-DNA hybrids. The protein is Ribonuclease HII of Clostridioides difficile (strain 630) (Peptoclostridium difficile).